Here is a 214-residue protein sequence, read N- to C-terminus: MRIILLGAPGAGKGTQAQFLMGKYGIPQISTGDMLRAAIKAGTELGLEAKRVMDEGKLVSDEIIIGLVKERIAQDDCKDGFLLDGFPRTIPQADAMKEAGVSVDHCIEFDVPDDVIVERMGGRRVHPASGRVYHVVYNPPKVEGKDNETGDDLIVRDDDKEETVRKRLAIYHEQTKPLVNYYSAEAEAGNCEYHKLDGTRPVEEVSAELAERLG.

10–15 (GAGKGT) contributes to the ATP binding site. An NMP region spans residues 30-59 (STGDMLRAAIKAGTELGLEAKRVMDEGKLV). AMP contacts are provided by residues Thr-31, Arg-36, 57–59 (KLV), 85–88 (GFPR), and Gln-92. Residues 122 to 159 (GRRVHPASGRVYHVVYNPPKVEGKDNETGDDLIVRDDD) form an LID region. Residues Arg-123 and 132–133 (VY) contribute to the ATP site. Residues Arg-156 and Arg-167 each coordinate AMP. An ATP-binding site is contributed by Arg-200.

The protein belongs to the adenylate kinase family. Monomer.

Its subcellular location is the cytoplasm. It carries out the reaction AMP + ATP = 2 ADP. Its pathway is purine metabolism; AMP biosynthesis via salvage pathway; AMP from ADP: step 1/1. Functionally, catalyzes the reversible transfer of the terminal phosphate group between ATP and AMP. Plays an important role in cellular energy homeostasis and in adenine nucleotide metabolism. In Alteromonas mediterranea (strain DSM 17117 / CIP 110805 / LMG 28347 / Deep ecotype), this protein is Adenylate kinase.